We begin with the raw amino-acid sequence, 325 residues long: Acetyl-coenzyme A carboxylase carboxyl transferase subunit alpha (325 aa).

The 255-residue stretch at 38–292 (RLEDRLAKLQ…DETLKQSLKT (255 aa)) folds into the CoA carboxyltransferase C-terminal domain.

This sequence belongs to the AccA family. Acetyl-CoA carboxylase is a heterohexamer composed of biotin carboxyl carrier protein (AccB), biotin carboxylase (AccC) and two subunits each of ACCase subunit alpha (AccA) and ACCase subunit beta (AccD).

Its subcellular location is the cytoplasm. The catalysed reaction is N(6)-carboxybiotinyl-L-lysyl-[protein] + acetyl-CoA = N(6)-biotinyl-L-lysyl-[protein] + malonyl-CoA. It participates in lipid metabolism; malonyl-CoA biosynthesis; malonyl-CoA from acetyl-CoA: step 1/1. Its activity is regulated as follows. Inhibited by pyrrolidine dione antibiotics moiramide B (CPD1) and CPD2. Its function is as follows. Component of the acetyl coenzyme A carboxylase (ACC) complex. First, biotin carboxylase catalyzes the carboxylation of biotin on its carrier protein (BCCP) and then the CO(2) group is transferred by the carboxyltransferase to acetyl-CoA to form malonyl-CoA. The chain is Acetyl-coenzyme A carboxylase carboxyl transferase subunit alpha from Bacillus subtilis (strain 168).